The following is a 138-amino-acid chain: MRHARGYRRLNRTHEHRKALFANMAGSLIEHEQIKTTLPKAKELRPIVEKLITLAKRGDLHARRQAASQLKQHAYVAKLFDVLGPRYAERQGGYVRIMKAGFRYGDMAPMAIIEFVDRDVDAKGAADKAREAADEDAL.

The protein belongs to the bacterial ribosomal protein bL17 family. Part of the 50S ribosomal subunit. Contacts protein L32.

This is Large ribosomal subunit protein bL17 from Dinoroseobacter shibae (strain DSM 16493 / NCIMB 14021 / DFL 12).